Reading from the N-terminus, the 404-residue chain is Phosphopentomutase (404 aa).

Asp-10, Asp-303, His-308, Asp-344, His-345, and His-356 together coordinate Mn(2+).

It belongs to the phosphopentomutase family. It depends on Mn(2+) as a cofactor.

It is found in the cytoplasm. It catalyses the reaction 2-deoxy-alpha-D-ribose 1-phosphate = 2-deoxy-D-ribose 5-phosphate. It carries out the reaction alpha-D-ribose 1-phosphate = D-ribose 5-phosphate. The protein operates within carbohydrate degradation; 2-deoxy-D-ribose 1-phosphate degradation; D-glyceraldehyde 3-phosphate and acetaldehyde from 2-deoxy-alpha-D-ribose 1-phosphate: step 1/2. Isomerase that catalyzes the conversion of deoxy-ribose 1-phosphate (dRib-1-P) and ribose 1-phosphate (Rib-1-P) to deoxy-ribose 5-phosphate (dRib-5-P) and ribose 5-phosphate (Rib-5-P), respectively. This Shewanella baltica (strain OS185) protein is Phosphopentomutase.